We begin with the raw amino-acid sequence, 449 residues long: Chromosomal replication initiator protein DnaA (449 aa).

Residues 1 to 83 (MDDSLWSACL…VELEIGSPPT (83 aa)) are domain I, interacts with DnaA modulators. Residues 77–114 (EIGSPPTPDQREAATGATRAAPAQRSSEPRQRPVDSNL) are disordered. The domain II stretch occupies residues 83-112 (TPDQREAATGATRAAPAQRSSEPRQRPVDS). Over residues 89–99 (AATGATRAAPA) the composition is skewed to low complexity. Residues 113 to 329 (NLNPGFTFDS…GALRRITANA (217 aa)) are domain III, AAA+ region. ATP-binding residues include glycine 157, glycine 159, lysine 160, and threonine 161. Positions 330–449 (QFTGRAIDVD…YDNLLRTLST (120 aa)) are domain IV, binds dsDNA.

This sequence belongs to the DnaA family. As to quaternary structure, oligomerizes as a right-handed, spiral filament on DNA at oriC.

It localises to the cytoplasm. Plays an essential role in the initiation and regulation of chromosomal replication. ATP-DnaA binds to the origin of replication (oriC) to initiate formation of the DNA replication initiation complex once per cell cycle. Binds the DnaA box (a 9 base pair repeat at the origin) and separates the double-stranded (ds)DNA. Forms a right-handed helical filament on oriC DNA; dsDNA binds to the exterior of the filament while single-stranded (ss)DNA is stabiized in the filament's interior. The ATP-DnaA-oriC complex binds and stabilizes one strand of the AT-rich DNA unwinding element (DUE), permitting loading of DNA polymerase. After initiation quickly degrades to an ADP-DnaA complex that is not apt for DNA replication. Binds acidic phospholipids. This chain is Chromosomal replication initiator protein DnaA, found in Halorhodospira halophila (strain DSM 244 / SL1) (Ectothiorhodospira halophila (strain DSM 244 / SL1)).